A 292-amino-acid polypeptide reads, in one-letter code: Insulin-like growth factor-binding protein 3 (292 aa).

The first 27 residues, 1 to 27 (MHPARPALWAAALTALTLLRGPPVARA), serve as a signal peptide directing secretion. The IGFBP N-terminal domain maps to 36 to 119 (PVVRCEPCDA…LNGRGFCANA (84 aa)). 6 disulfide bridges follow: cysteine 40-cysteine 69, cysteine 43-cysteine 71, cysteine 51-cysteine 72, cysteine 60-cysteine 75, cysteine 83-cysteine 96, and cysteine 90-cysteine 116. 3 N-linked (GlcNAc...) asparagine glycosylation sites follow: asparagine 118, asparagine 124, and asparagine 137. Disordered regions lie at residues 127 to 161 (AYLP…THRV) and 191 to 211 (YESQ…ETEY). Over residues 129-139 (LPSQPSPGNTT) the composition is skewed to polar residues. At serine 149 the chain carries Phosphoserine. The segment covering 192 to 203 (ESQSTDTQNFSS) has biased composition (polar residues). Asparagine 200 carries N-linked (GlcNAc...) asparagine glycosylation. Serine 202 carries the phosphoserine modification. Residues 211 to 286 (YGPCRREMED…DTKGKDDVHC (76 aa)) form the Thyroglobulin type-1 domain. 3 cysteine pairs are disulfide-bonded: cysteine 214–cysteine 241, cysteine 252–cysteine 263, and cysteine 265–cysteine 286.

In terms of assembly, interacts with XLKD1. Binds IGF2 more than IGF1. Forms a ternary complex of about 140 to 150 kDa with IGF1 or IGF2 and a 85 kDa glycoprotein (ALS). Interacts with humanin; humanin competes with importin KPNB1 for binding to IGFBP3, blocking IGFBP3 nuclear import and IGFBP3-mediated apoptosis. Interacts with TMEM219. Interacts with RXRA; this interaction modulates the transcriptional activity of RXRA. Interacts with LRP1; this interaction mediates cell growth inhibition independent of IGF1. Phosphorylated by FAM20C in the extracellular medium. Phosphorylated by CK2; resulting in decreased nuclear localization.

It localises to the secreted. Its subcellular location is the nucleus. Its function is as follows. Multifunctional protein that plays a critical role in regulating the availability of IGFs such as IGF1 and IGF2 to their receptors and thereby regulates IGF-mediated cellular processes including proliferation, differentiation, and apoptosis in a cell-type specific manner. Also exhibits IGF-independent antiproliferative and apoptotic effects mediated by its receptor TMEM219/IGFBP-3R. Inhibits the positive effect of humanin on insulin sensitivity. Promotes testicular germ cell apoptosis. Acts via LRP-1/alpha2M receptor, also known as TGF-beta type V receptor, to mediate cell growth inhibition independent of IGF1. Mechanistically, induces serine-specific dephosphorylation of IRS1 or IRS2 upon ligation to its receptor, leading to the inhibitory cascade. In the nucleus, interacts with transcription factors such as retinoid X receptor-alpha/RXRA to regulate transcriptional signaling and apoptosis. This chain is Insulin-like growth factor-binding protein 3 (Igfbp3), found in Rattus norvegicus (Rat).